The sequence spans 99 residues: UPF0235 protein Sbal_3028 (99 aa).

Belongs to the UPF0235 family.

The chain is UPF0235 protein Sbal_3028 from Shewanella baltica (strain OS155 / ATCC BAA-1091).